Here is a 384-residue protein sequence, read N- to C-terminus: MSKQRVVVGMSGGVDSSVTAWLLKEQGYDVVGLFMKNWEDDDDSEYCSTRQDWIDVVSVADLIGIDVEAVNFAAEYKDRVFAEFLREYSAGRTPNPDVLCNAEIKFKAFLDHAMSLGAETIATGHYARVREIDGRFELLKARDHTKDQSYFLHRLNQAQLSKTLFPLGDIPKTKVREIAEQIGLPNAKKKDSTGICFIGERPFRDFLNRYLPTRPGPMKTTDGKTVGEHIGLAFYTFGQRKGIGLGGSKDGSGEPWFVAGKDIESNTLYVAQGHDHPWLLSRTLTAGNTSWVAGHAPEVGHACAAKTRYRQADAACTFGAAGANADPNALFSLHFADAQWAVTPGQSAVLYDGDVCLGGGIIEHAATAQPVTRQPQKAALLTAR.

ATP-binding positions include 9–16 (GMSGGVDS) and M35. Residues 95–97 (NPD) are interaction with target base in tRNA. C100 (nucleophile) is an active-site residue. The cysteines at positions 100 and 196 are disulfide-linked. G124 serves as a coordination point for ATP. The interaction with tRNA stretch occupies residues 146–148 (KDQ). Catalysis depends on C196, which acts as the Cysteine persulfide intermediate. Residues 308-309 (RY) form an interaction with tRNA region.

This sequence belongs to the MnmA/TRMU family.

It localises to the cytoplasm. The catalysed reaction is S-sulfanyl-L-cysteinyl-[protein] + uridine(34) in tRNA + AH2 + ATP = 2-thiouridine(34) in tRNA + L-cysteinyl-[protein] + A + AMP + diphosphate + H(+). In terms of biological role, catalyzes the 2-thiolation of uridine at the wobble position (U34) of tRNA, leading to the formation of s(2)U34. The protein is tRNA-specific 2-thiouridylase MnmA of Paraburkholderia phymatum (strain DSM 17167 / CIP 108236 / LMG 21445 / STM815) (Burkholderia phymatum).